Here is a 289-residue protein sequence, read N- to C-terminus: Shikimate kinase (289 aa).

84–94 is a binding site for ATP; sequence PMASGLSSSSA.

The protein belongs to the GHMP kinase family. Archaeal shikimate kinase subfamily.

The protein localises to the cytoplasm. The catalysed reaction is shikimate + ATP = 3-phosphoshikimate + ADP + H(+). It functions in the pathway metabolic intermediate biosynthesis; chorismate biosynthesis; chorismate from D-erythrose 4-phosphate and phosphoenolpyruvate: step 5/7. This chain is Shikimate kinase, found in Methanobrevibacter smithii (strain ATCC 35061 / DSM 861 / OCM 144 / PS).